Reading from the N-terminus, the 113-residue chain is Nucleoid-associated protein PMT_0025 (113 aa).

This sequence belongs to the YbaB/EbfC family. As to quaternary structure, homodimer.

The protein localises to the cytoplasm. It is found in the nucleoid. Binds to DNA and alters its conformation. May be involved in regulation of gene expression, nucleoid organization and DNA protection. The sequence is that of Nucleoid-associated protein PMT_0025 from Prochlorococcus marinus (strain MIT 9313).